A 309-amino-acid polypeptide reads, in one-letter code: MNNPSLLNHAVETMAVGSKSFATASKLFDAKTRRSVLMLYAWCRHCDDVIDDQTLGFQARQPALQTPEQRLMQLEMKTRQAYAGSQMHEPAFAAFQEVAMAHDIAPAYAFDHLEGFAMDVREAQYSQLDDTLRYCYHVAGVVGLMMAQIMGVRDNATLDRACDLGLAFQLTNIARDIVDDAHAGRCYLPASWLEHEGLNKENYAAPENRQALSRIARRLVQEAEPYYLSATAGLAGLPLRSAWAIATAKQVYRKIGVKVEQAGQQAWDQRQSTTTPEKLTLLLAASGQALTSRMRAHPPRPAHLWQRPL.

A disordered region spans residues 290–309 (LTSRMRAHPPRPAHLWQRPL).

It belongs to the phytoene/squalene synthase family. Requires ATP as cofactor. It depends on Mn(2+) as a cofactor. Mg(2+) is required as a cofactor.

The catalysed reaction is 2 (2E,6E,10E)-geranylgeranyl diphosphate = 15-cis-phytoene + 2 diphosphate. The protein operates within carotenoid biosynthesis; phytoene biosynthesis. Inhibited by phosphate ions and squalestatin. Functionally, involved in the biosynthesis of carotenoids. Catalyzes the condensation of two molecules of geranylgeranyl diphosphate (GGPP) to give prephytoene diphosphate (PPPP) and the subsequent rearrangement of the cyclopropylcarbinyl intermediate to yield the 15-cis-phytoene isomer. The polypeptide is 15-cis-phytoene synthase (crtB) (Pantoea ananas (Erwinia uredovora)).